Consider the following 155-residue polypeptide: Large ribosomal subunit protein uL13 (155 aa).

This sequence belongs to the universal ribosomal protein uL13 family. As to quaternary structure, part of the 50S ribosomal subunit.

Functionally, this protein is one of the early assembly proteins of the 50S ribosomal subunit, although it is not seen to bind rRNA by itself. It is important during the early stages of 50S assembly. This is Large ribosomal subunit protein uL13 from Rickettsia rickettsii (strain Iowa).